Consider the following 210-residue polypeptide: MTTIYISSKQAHNFDDYTINKIGVPSSVLMERAALAVCQRLLESRNFNLKKVLVVAGIGNNGGDGIAVARMLYLKQVPVKIYLLGDREKISKDSRIQLKIAENYGVPFVSNIDDLSSYTTIVDAVFGVGLSRDVTGEIAGIVDFINNSPASVMAVDMPTGLNADNGNIMGTAVKAAETVTMSYNKLGLISETGRKFAGVVTVADIGIYEP.

A YjeF N-terminal domain is found at 11–210; it reads AHNFDDYTIN…TVADIGIYEP (200 aa). 60-64 contributes to the (6S)-NADPHX binding site; that stretch reads NNGGD. 2 residues coordinate K(+): N61 and D123. Residues 127–133 and D156 contribute to the (6S)-NADPHX site; that span reads GVGLSRD. T159 provides a ligand contact to K(+).

This sequence belongs to the NnrE/AIBP family. Requires K(+) as cofactor.

The catalysed reaction is (6R)-NADHX = (6S)-NADHX. It carries out the reaction (6R)-NADPHX = (6S)-NADPHX. Catalyzes the epimerization of the S- and R-forms of NAD(P)HX, a damaged form of NAD(P)H that is a result of enzymatic or heat-dependent hydration. This is a prerequisite for the S-specific NAD(P)H-hydrate dehydratase to allow the repair of both epimers of NAD(P)HX. This is NAD(P)H-hydrate epimerase from Oenococcus oeni (strain ATCC BAA-331 / PSU-1).